The following is a 397-amino-acid chain: 1-deoxy-D-xylulose 5-phosphate reductoisomerase (397 aa).

NADPH-binding residues include Thr10, Gly11, Ser12, Ile13, Gly36, Asn38, and Asn128. Residue Lys129 coordinates 1-deoxy-D-xylulose 5-phosphate. Glu130 contacts NADPH. A Mn(2+)-binding site is contributed by Asp154. Residues Ser155, Glu156, Ser180, and His203 each contribute to the 1-deoxy-D-xylulose 5-phosphate site. Position 156 (Glu156) interacts with Mn(2+). Gly209 contributes to the NADPH binding site. Residues Asn221, Lys222, and Glu225 each contribute to the 1-deoxy-D-xylulose 5-phosphate site. A Mn(2+)-binding site is contributed by Glu225.

The protein belongs to the DXR family. The cofactor is Mg(2+). Mn(2+) is required as a cofactor.

It catalyses the reaction 2-C-methyl-D-erythritol 4-phosphate + NADP(+) = 1-deoxy-D-xylulose 5-phosphate + NADPH + H(+). The protein operates within isoprenoid biosynthesis; isopentenyl diphosphate biosynthesis via DXP pathway; isopentenyl diphosphate from 1-deoxy-D-xylulose 5-phosphate: step 1/6. Its function is as follows. Catalyzes the NADPH-dependent rearrangement and reduction of 1-deoxy-D-xylulose-5-phosphate (DXP) to 2-C-methyl-D-erythritol 4-phosphate (MEP). This is 1-deoxy-D-xylulose 5-phosphate reductoisomerase from Solibacter usitatus (strain Ellin6076).